The following is a 429-amino-acid chain: Adenylosuccinate synthetase (429 aa).

Residues Gly-12 to Lys-18 and Gly-40 to Thr-42 contribute to the GTP site. Asp-13 functions as the Proton acceptor in the catalytic mechanism. Mg(2+) contacts are provided by Asp-13 and Gly-40. IMP-binding positions include Asp-13–Lys-16, Asn-38–His-41, Thr-129, Arg-143, Gln-223, Thr-238, and Arg-302. Residue His-41 is the Proton donor of the active site. Residue Thr-298–Arg-304 coordinates substrate. Residues Arg-304, Lys-330–Asp-332, and Ser-412–Ser-414 contribute to the GTP site.

It belongs to the adenylosuccinate synthetase family. As to quaternary structure, homodimer. Requires Mg(2+) as cofactor.

The protein localises to the cytoplasm. It carries out the reaction IMP + L-aspartate + GTP = N(6)-(1,2-dicarboxyethyl)-AMP + GDP + phosphate + 2 H(+). It functions in the pathway purine metabolism; AMP biosynthesis via de novo pathway; AMP from IMP: step 1/2. Plays an important role in the de novo pathway of purine nucleotide biosynthesis. Catalyzes the first committed step in the biosynthesis of AMP from IMP. This chain is Adenylosuccinate synthetase, found in Rhizorhabdus wittichii (strain DSM 6014 / CCUG 31198 / JCM 15750 / NBRC 105917 / EY 4224 / RW1) (Sphingomonas wittichii).